A 446-amino-acid polypeptide reads, in one-letter code: 5-hydroxytryptamine receptor 7 (446 aa).

Residues 1–84 lie on the Extracellular side of the membrane; sequence MMGVNSSGRP…INYGRAEKVV (84 aa). 2 N-linked (GlcNAc...) asparagine glycosylation sites follow: Asn5 and Asn67. A helical membrane pass occupies residues 85–109; it reads IGSILTLITLLTIAGNCLVVISVCF. The Cytoplasmic portion of the chain corresponds to 110 to 119; the sequence is VKKLRQPSNY. Residues 120–141 form a helical membrane-spanning segment; that stretch reads LIVSLALADLSVAVAVIPFVSV. At 142–153 the chain is on the extracellular side; sequence TDLIGGKWIFGH. Residues 154–179 traverse the membrane as a helical segment; the sequence is FFCNVFIAMDVMCCTASIMTLCVISI. Cys156 and Cys232 are disulfide-bonded. Asp163 serves as a coordination point for serotonin. Topologically, residues 180–199 are cytoplasmic; the sequence is DRYLGITRPLTYPVRQNGKC. A helical membrane pass occupies residues 200 to 220; it reads MPKMILSVWLLSASITLPPLF. Topologically, residues 221 to 238 are extracellular; it reads GWAQNVNDDKVCLISQDF. Residues 239–261 traverse the membrane as a helical segment; it reads GYTIYSTAVAFYIPMSVMLFMYY. Topologically, residues 262–327 are cytoplasmic; that stretch reads RIYKAARKSA…SIFKREQKAA (66 aa). Residues 328 to 353 form a helical membrane-spanning segment; the sequence is TTLGIIVGAFTVCWLPFFLLSTARPF. The Extracellular portion of the chain corresponds to 354-364; the sequence is ICGTACSCIPL. A helical transmembrane segment spans residues 365-388; sequence WVERTCLWLGYANSLINPFIYAFF. Over 389–446 the chain is Cytoplasmic; it reads NRDLRTTYRSLLQCQYRNINRKLSAAGMHEALKLAERPERPECVLQNSDYCRKKGHDS. Cys402 is lipidated: S-palmitoyl cysteine.

Belongs to the G-protein coupled receptor 1 family.

It is found in the cell membrane. Its function is as follows. G-protein coupled receptor for 5-hydroxytryptamine (serotonin), a biogenic hormone that functions as a neurotransmitter, a hormone and a mitogen. Ligand binding causes a conformation change that triggers signaling via guanine nucleotide-binding proteins (G proteins) and modulates the activity of downstream effectors. HTR7 is coupled to G(s) G alpha proteins and mediates activation of adenylate cyclase activity. The sequence is that of 5-hydroxytryptamine receptor 7 (HTR7) from Cavia porcellus (Guinea pig).